The primary structure comprises 214 residues: Ceramide-1-phosphate transfer protein (214 aa).

An N-acylsphingoid base 1-phosphate is bound by residues Asp56, Lys60, Arg106, Arg110, and His150.

It belongs to the GLTP family. Ubiquitous. Detected in heart, brain, placenta, lung, liver, skeletal muscle, kidney, pancreas, spleen, thymus, prostate, testis, ovary, small intestine, colon and peripheral blood leukocytes.

The protein resides in the cytoplasm. It is found in the cytosol. The protein localises to the golgi apparatus. Its subcellular location is the trans-Golgi network membrane. It localises to the cell membrane. The protein resides in the endosome membrane. It is found in the nucleus outer membrane. It carries out the reaction N-(hexadecanoyl)-sphing-4-enine-1-phosphate(in) = N-(hexadecanoyl)-sphing-4-enine-1-phosphate(out). The catalysed reaction is N-(9Z-octadecenoyl)-sphing-4-enine-1-phosphate(in) = N-(9Z-octadecenoyl)-sphing-4-enine-1-phosphate(out). Its function is as follows. Mediates the intracellular transfer of ceramide-1-phosphate (C1P) between organelle membranes and the cell membrane. Required for normal structure of the Golgi stacks. Can bind phosphoceramides with a variety of aliphatic chains, but has a preference for lipids with saturated C16:0 or monounsaturated C18:1 aliphatic chains, and is inefficient with phosphoceramides containing lignoceryl (C24:0). Plays a role in the regulation of the cellular levels of ceramide-1-phosphate, and thereby contributes to the regulation of phospholipase PLA2G4A activity and the release of arachidonic acid. Has no activity with galactosylceramide, lactosylceramide, sphingomyelin, phosphatidylcholine, phosphatidic acid and ceramide. C1P transfer is stimulated by phosphatidylserine in C1P source vesicles. Regulates autophagy, inflammasome mediated IL1B and IL18 processing, and pyroptosis, but not apoptosis. The polypeptide is Ceramide-1-phosphate transfer protein (Homo sapiens (Human)).